A 101-amino-acid chain; its full sequence is Small ribosomal subunit protein eS24 (101 aa).

It belongs to the eukaryotic ribosomal protein eS24 family.

This chain is Small ribosomal subunit protein eS24, found in Methanosarcina acetivorans (strain ATCC 35395 / DSM 2834 / JCM 12185 / C2A).